We begin with the raw amino-acid sequence, 1121 residues long: Phosphatidylinositol 4-kinase beta 1 (1121 aa).

The PIK helical domain maps to 1-143 (MPMGRFLSLV…SRIQEKCQIA (143 aa)). Residues 187-207 (PPTQKSLSFSPSPGTNVQDDG) show a composition bias toward polar residues. Residues 187 to 210 (PPTQKSLSFSPSPGTNVQDDGSQL) form a disordered region. 9 consecutive repeat copies span residues 212–231 (AEDNKIFKKLIPSPKVRDAL), 244–263 (SEKEGFFKRLLRDSKGEGDE), 266–285 (PNSEGFFKRLLKDNKSEDED), 288–306 (NSSEGFFKRLLSSKGESEE), 309–328 (SSSDGLFKRLLRDNKGDEEE), 331–350 (ANSDSFFKRLLRESKNEDEE), 353–372 (PNSEGFFKKLFRDSKPEDDK), 380–398 (EDKDGFLKKLFREKNDDKR), and 420–438 (DEREGFFKKFFKEKSDDKK). An 11 X 20 AA approximate repeats (PPC) region spans residues 212–508 (AEDNKIFKKL…FRDRDQSVED (297 aa)). 4 disordered regions span residues 343 to 421 (ESKN…EEDE), 435 to 489 (DDKK…ESSP), 506 to 544 (VEDSELFGSKKHKEKRPGSPKQRDDTPSGKPPLPNNTAS), and 794 to 825 (AAAAKGEAPPGLPLKGAGQDSSDAQPRANGGM). Composition is skewed to basic and acidic residues over residues 358–376 (FFKKLFRDSKPEDDKVPKE), 383–405 (DGFLKKLFREKNDDKRHGSEKNE), 412–421 (ADKKSGEEDE), and 435–445 (DDKKDIVKVDD). Acidic residues predominate over residues 446 to 455 (GNESEGDESP). S449 and S454 each carry phosphoserine. Repeat copies occupy residues 454 to 472 (SPEFSLFKRLFRIHPEDAK) and 489 to 508 (PGTENFFRKLFRDRDQSVED). Residues 466 to 475 (IHPEDAKPTS) show a composition bias toward basic and acidic residues. Residues 476 to 489 (ENENSSNGLVESSP) are compositionally biased toward polar residues. The PI3K/PI4K catalytic domain maps to 835 to 1106 (ELWEGKRDRI…LISSSLDAWR (272 aa)). Residues 841-847 (RDRIRKA) are G-loop. Residues 969 to 977 (QVKDRHNGN) are catalytic loop. Residues 988-1012 (HIDFGFMLSNSPGGVNFESAPFKLT) are activation loop.

Belongs to the PI3/PI4-kinase family. Type III PI4K subfamily. In terms of assembly, interacts with AHK2, CBL1 and RABA4D. Expressed constitutively in leaves, roots, flowers, and stems.

It is found in the cell membrane. The protein localises to the golgi apparatus. It localises to the trans-Golgi network. The protein resides in the cytoplasmic vesicle membrane. The catalysed reaction is a 1,2-diacyl-sn-glycero-3-phospho-(1D-myo-inositol) + ATP = a 1,2-diacyl-sn-glycero-3-phospho-(1D-myo-inositol 4-phosphate) + ADP + H(+). Its activity is regulated as follows. Stimulated by phosphatidylinositol 4-phosphate (PtdIns4P). Slightly repressed by phosphatidyl-choline (PtdCho), wortmannin and adenosine. Its function is as follows. Acts on phosphatidylinositol (PtdIns) in the first committed step in the production of the second messenger inositol-1,4,5-trisphosphate. Necessary for proper organization of the trans-Golgi network (TGN) and post-Golgi secretion in root hairs. Together with PI4KB2, required during polarized root hair expansion and pollen tube elongation. Functions redundantly with PI4KB2 upstream of the cold response phosphoinositide-dependent phospholipase C (PI-PLC) pathway. The chain is Phosphatidylinositol 4-kinase beta 1 from Arabidopsis thaliana (Mouse-ear cress).